Here is an 89-residue protein sequence, read N- to C-terminus: Large ribosomal subunit protein bL27 (89 aa).

Residues 1–21 (MAHKKAGGSSRNGRDSKGKRL) are disordered.

It belongs to the bacterial ribosomal protein bL27 family.

This Bradyrhizobium sp. (strain ORS 278) protein is Large ribosomal subunit protein bL27.